The primary structure comprises 673 residues: UPF0313 protein blr7973 (673 aa).

Residues 332–611 (AWDMIKFSVT…KAFLRYHDPD (280 aa)) form the Radical SAM core domain. [4Fe-4S] cluster contacts are provided by C346, C350, and C353. Residues 632–673 (RPDQLVPAHQPPGTGKAAGTRRPVRPGGKTQRFTTKGLRVMK) form a disordered region.

Belongs to the UPF0313 family. Requires [4Fe-4S] cluster as cofactor.

In Bradyrhizobium diazoefficiens (strain JCM 10833 / BCRC 13528 / IAM 13628 / NBRC 14792 / USDA 110), this protein is UPF0313 protein blr7973.